Here is a 218-residue protein sequence, read N- to C-terminus: MFQGQRGWFCGSVSQDLRQIWEDEGGMVSDVKAADFLFSCDASHPDTLRIYQSLEYIEDNATVFHAYYLAAIANTEMKNSVALGHFVLPPACLQKEIRRKIGSFIWEQDEKFQIEKHDRMASSDKENIRPTPEHKQELSKSAEHHLTRTPVIEKQMCFPLHSYPVNNMVTGYISIDALEKFLGELHDFTPGSSGYLAYHIQDEINMSAIKNKLRRKLS.

The tract at residues 117–143 (HDRMASSDKENIRPTPEHKQELSKSAE) is disordered.

Belongs to the TERB2 family. As to quaternary structure, component of the MAJIN-TERB1-TERB2 complex, composed of MAJIN, TERB1 and TERB2. In terms of tissue distribution, specifically expressed in germline tissues.

Its subcellular location is the chromosome. The protein resides in the telomere. It localises to the nucleus inner membrane. In terms of biological role, meiosis-specific telomere-associated protein involved in meiotic telomere attachment to the nucleus inner membrane, a crucial step for homologous pairing and synapsis. Component of the MAJIN-TERB1-TERB2 complex, which promotes telomere cap exchange by mediating attachment of telomeric DNA to the inner nuclear membrane and replacement of the protective cap of telomeric chromosomes: in early meiosis, the MAJIN-TERB1-TERB2 complex associates with telomeric DNA and the shelterin/telosome complex. During prophase, the complex matures and promotes release of the shelterin/telosome complex from telomeric DNA. The chain is Telomere repeats-binding bouquet formation protein 2 from Mus musculus (Mouse).